Reading from the N-terminus, the 340-residue chain is Protein-lysine N-methyltransferase EEF2KMT (340 aa).

The residue at position 1 (Met-1) is an N-acetylmethionine. Residues Trp-139, 165-167 (GSG), Trp-238, and Ala-257 contribute to the S-adenosyl-L-methionine site.

The protein belongs to the class I-like SAM-binding methyltransferase superfamily. EEF2KMT family. In terms of assembly, interacts with FAM86B2 and FAM86C1P.

It localises to the cytoplasm. The enzyme catalyses L-lysyl-[protein] + 3 S-adenosyl-L-methionine = N(6),N(6),N(6)-trimethyl-L-lysyl-[protein] + 3 S-adenosyl-L-homocysteine + 3 H(+). In terms of biological role, catalyzes the trimethylation of eukaryotic elongation factor 2 (EEF2) on 'Lys-525'. The polypeptide is Protein-lysine N-methyltransferase EEF2KMT (EEF2KMT) (Bos taurus (Bovine)).